We begin with the raw amino-acid sequence, 838 residues long: Protein translocase subunit SecA 1 (838 aa).

Residues Q85, 103 to 107 (GEGKT), and D493 each bind ATP. C823, C825, C834, and H835 together coordinate Zn(2+).

It belongs to the SecA family. As to quaternary structure, monomer and homodimer. Part of the essential Sec protein translocation apparatus which comprises SecA, SecYEG and auxiliary proteins SecDF. Other proteins may also be involved. It depends on Zn(2+) as a cofactor.

It localises to the cell membrane. The protein resides in the cytoplasm. The enzyme catalyses ATP + H2O + cellular proteinSide 1 = ADP + phosphate + cellular proteinSide 2.. Its function is as follows. Part of the Sec protein translocase complex. Interacts with the SecYEG preprotein conducting channel. Has a central role in coupling the hydrolysis of ATP to the transfer of proteins into and across the cell membrane, serving as an ATP-driven molecular motor driving the stepwise translocation of polypeptide chains across the membrane. The protein is Protein translocase subunit SecA 1 of Streptococcus gordonii.